Reading from the N-terminus, the 527-residue chain is MDVKNSPSSLNSPVSYNCGQSILPLEPGPIYLPSSYVESRHEYSAVTFYSPAVMNYSIPNNSEDGPGRQTTSPNVLWPTPGHLSPLAIHCQSSLLYAEPQKSPWCETRSLEHTFPVNRETLKRKASGSSCASPVSSPSSKRDAHFCAVCSDYASGYHYGVWSCEGCKAFFKRSIQGHNDYICPATNQCTIDKNRRKSCQACRLRKCYEVGMVKCGSRRERCGYRIVRRQRNSDEQLHCLSKTKRNGAPMTRVKELLLSALSPEQLVLTLLEAEPPHVLMSRPSAPFTEASMMMSLTKLADKELVHMISWAKKIPGFVELSLYDQVRLLESCWLEVLMVGLMWRSIDHPGKLIFAPDLVLDRDEGKCVEGILEIFDMLLATTSRFRELKLQHKEYLCVKAMILLNSSMYPSATASQEADSGRKLTHLLNAVTDALVWVIAKSGMSSQQQSMRLANLLMLLSHVRHASNKGMEHLLNMKCKNVVPVYDLLLEMLNAHTLRSNKPLVTRSERNLAEDSESKEGSQKPQAQ.

The interval Met1–Phe145 is modulating. A phosphoserine; by MAPK mark is found at Ser84 and Ser102. NR C4-type zinc fingers lie at residues Cys146–Cys166 and Cys182–Cys206. Positions Cys146 to Met211 form a DNA-binding region, nuclear receptor. One can recognise an NR LBD domain in the interval Ser261 to His495. Residues Thr505 to Gln527 are disordered. Basic and acidic residues predominate over residues Arg506–Ser521.

It belongs to the nuclear hormone receptor family. NR3 subfamily. As to quaternary structure, binds DNA as a homodimer. Can form a heterodimer with ESR1. Interacts with NCOA1, NCOA3, NCOA5 and NCOA6 coactivators, leading to a strong increase of transcription of target genes. Interacts with UBE1C and AKAP13. Interacts with DNTTIP2. Interacts with CCDC62 in the presence of estradiol/E2; this interaction seems to enhance the transcription of target genes. Interacts with DNAAF4. Interacts with PRMT2. Interacts with CCAR2 (via N-terminus) in a ligand-independent manner. Interacts with RBM39, in the presence of estradiol (E2). Interacts with STUB1/CHIP. In terms of processing, phosphorylation at Ser-84 and Ser-102 recruits NCOA1.

The protein localises to the nucleus. Nuclear hormone receptor. Binds estrogens with an affinity similar to that of ESR1/ER-alpha, and activates expression of reporter genes containing estrogen response elements (ERE) in an estrogen-dependent manner. This is Estrogen receptor beta (ESR2) from Ovis aries (Sheep).